Here is an 851-residue protein sequence, read N- to C-terminus: Protein translocase subunit SecA (851 aa).

Residues Q88, G106–T110, and D496 contribute to the ATP site. The Zn(2+) site is built by C828, C830, C839, and H840.

It belongs to the SecA family. As to quaternary structure, monomer and homodimer. Part of the essential Sec protein translocation apparatus which comprises SecA, SecYEG and auxiliary proteins SecDF-YajC and YidC. Requires Zn(2+) as cofactor.

It localises to the cell inner membrane. The protein resides in the cytoplasm. The enzyme catalyses ATP + H2O + cellular proteinSide 1 = ADP + phosphate + cellular proteinSide 2.. In terms of biological role, part of the Sec protein translocase complex. Interacts with the SecYEG preprotein conducting channel. Has a central role in coupling the hydrolysis of ATP to the transfer of proteins into and across the cell membrane, serving as an ATP-driven molecular motor driving the stepwise translocation of polypeptide chains across the membrane. The polypeptide is Protein translocase subunit SecA (Helicobacter hepaticus (strain ATCC 51449 / 3B1)).